A 490-amino-acid polypeptide reads, in one-letter code: MGFDSVKVMENWQSKTSNENEKKKKKRRRKKNNNVRNSEHYEEEANGCWVKFRYIVCCASSTSDVETSLTLSTSTVGSQSAIVQSNDQPVGPVSSTTTTSNAESSLSTPIISEELNIYSHLKKFSFIDLKLATRNFRPESLLGEGGFGCVFKGWVEENGTAPVKPGTGLTVAVKTLNPDGLQGHKEWLAEINYLGNLLHPNLVKLVGYCIEDDQRLLVYEFMPRGSLENHLFRRSLPLPWSIRMKIALGAAKGLSFLHEEALKPVIYRDFKTSNILLDGEYNAKLSDFGLAKDAPDEGKTHVSTRVMGTYGYAAPEYVMTGHLTSKSDVYSFGVVLLEMLTGRRSMDKNRPNGEHNLVEWARPHLLDKRRFYRLLDPRLEGHFSVKGAQKVTQLAAQCLSRDSKIRPKMSEVVEVLKPLPHLKDMASASYYFQTMQAERLKAGSGSGSGRGFGSRNGQPVFRTLSSPHGQAGSSPYRHQIPSPKPKGATT.

Disordered stretches follow at residues 1-39 (MGFDSVKVMENWQSKTSNENEKKKKKRRRKKNNNVRNSE) and 80-103 (SAIVQSNDQPVGPVSSTTTTSNAE). Residues 14-39 (SKTSNENEKKKKKRRRKKNNNVRNSE) adopt a coiled-coil conformation. Positions 23–33 (KKKKRRRKKNN) are enriched in basic residues. The span at 94 to 103 (SSTTTTSNAE) shows a compositional bias: low complexity. The Protein kinase domain maps to 136 to 422 (FRPESLLGEG…VEVLKPLPHL (287 aa)). ATP is bound by residues 142-150 (LGEGGFGCV) and Lys-174. Tyr-219 is subject to Phosphotyrosine. Residue Asp-269 is the Proton acceptor of the active site. Residues Ser-273 and Ser-303 each carry the phosphoserine modification. Phosphothreonine is present on residues Thr-304 and Thr-309. Tyr-317 bears the Phosphotyrosine mark. The interval 442–490 (AGSGSGSGRGFGSRNGQPVFRTLSSPHGQAGSSPYRHQIPSPKPKGATT) is disordered. Gly residues predominate over residues 444–454 (SGSGSGRGFGS). The segment covering 463 to 473 (TLSSPHGQAGS) has biased composition (polar residues).

It belongs to the protein kinase superfamily. Ser/Thr protein kinase family. In terms of assembly, interacts with SD129. Post-translationally, phosphorylated by SD129 in response to the pathogen-associated molecular pattern (PAMP) 3-OH-C10:0, a medium-chain 3-hydroxy fatty acid.

The protein localises to the cell membrane. It catalyses the reaction L-seryl-[protein] + ATP = O-phospho-L-seryl-[protein] + ADP + H(+). The enzyme catalyses L-threonyl-[protein] + ATP = O-phospho-L-threonyl-[protein] + ADP + H(+). Involved in chitin-triggered immune signaling and is required for reactive oxygen species (ROS) production. Acts downstream of SD129 in defense signaling triggered by the pathogen-associated molecular pattern (PAMP) 3-OH-C10:0, a medium-chain 3-hydroxy fatty acid. This Arabidopsis thaliana (Mouse-ear cress) protein is Serine/threonine-protein kinase PBL35.